Reading from the N-terminus, the 208-residue chain is Platelet-activating factor receptor (208 aa).

The Extracellular portion of the chain corresponds to 1–16 (MEPHDSSHVDSEFRYT). The chain crosses the membrane as a helical span at residues 17–38 (LFPIVYSIIFVLGVIANGYVLW). Residues 39–54 (VFARLYPSKKFNEIKI) lie on the Cytoplasmic side of the membrane. Residues 55–74 (FMVNLTMADMLFLITLPLWI) traverse the membrane as a helical segment. The Extracellular portion of the chain corresponds to 75 to 91 (VYYQNGGNWIFPKFLCN). A disulfide bridge connects residues Cys-90 and Cys-173. A helical membrane pass occupies residues 92 to 113 (LAGCLFFINTYCSVAFLGVITY). The Cytoplasmic segment spans residues 114 to 133 (NRFQAVTRPIKTAQANTRKR). The helical transmembrane segment at 134–155 (GISLSLVIWVAIVGAASYFFIL) threads the bilayer. At 156-184 (DSTNTVPNSAGSGNITRCFEHYEKGSVPV) the chain is on the extracellular side. Asn-169 carries N-linked (GlcNAc...) asparagine glycosylation. A helical transmembrane segment spans residues 185 to 205 (LIIHIFIVFSFFLVFLIILFC). Topologically, residues 206–208 (NLV) are cytoplasmic.

Belongs to the G-protein coupled receptor 1 family. Interacts with ARRB1.

The protein resides in the cell membrane. Receptor for platelet activating factor, a chemotactic phospholipid mediator that possesses potent inflammatory, smooth-muscle contractile and hypotensive activity. Seems to mediate its action via a G protein that activates a phosphatidylinositol-calcium second messenger system. The sequence is that of Platelet-activating factor receptor (PTAFR) from Macaca mulatta (Rhesus macaque).